Reading from the N-terminus, the 306-residue chain is Putative dihydroorotate dehydrogenase A (fumarate) (306 aa).

FMN-binding positions include Ser24 and 48–49; that span reads KS. Substrate contacts are provided by residues Lys48, 72–76, and Asn129; that span reads NAVGL. Asn129 contributes to the FMN binding site. The active-site Nucleophile is Cys132. Lys167 and Ile192 together coordinate FMN. 193 to 194 contacts substrate; it reads NS. FMN-binding positions include Gly218 and 244–245; that span reads GG.

It belongs to the dihydroorotate dehydrogenase family. Type 1 subfamily. In terms of assembly, homodimer. FMN serves as cofactor.

It is found in the cytoplasm. The catalysed reaction is (S)-dihydroorotate + fumarate = orotate + succinate. It participates in pyrimidine metabolism; UMP biosynthesis via de novo pathway. In terms of biological role, catalyzes the conversion of dihydroorotate to orotate with fumarate as the electron acceptor. The protein is Putative dihydroorotate dehydrogenase A (fumarate) (pyrD) of Aeropyrum pernix (strain ATCC 700893 / DSM 11879 / JCM 9820 / NBRC 100138 / K1).